We begin with the raw amino-acid sequence, 445 residues long: MTTSTPNGHDLPARLLQALAPWRTASTWYVGFSGGLDSTVLLHLLAELAKRANLPALHAIHVHHGLQAIADAWPEHCRQVCQALGVAFESVRVKVEPGASVEQAARQARYAAFTERLGEGDVLLTGQHRDDQAETLLFRLLRGAGVRGLAAMPEQRRLGRGHLARPLLGVSRVELESYARRQGLRWVEDPSNDDQQFSRNFLRSQVLPLLTSIWPHATASLARTAGHLGEAQQLLDELAAQDVANAQATTPFSWLGLPVLNLGPIARLSGARQRNVMRHWLAPLTRLPDSDHWAGWEALRDAAQDARPLWRLADGALHRAQGCIWWLPAGWEQACSEAVNWADPRAPLDLPENGQVSLEGEAPLGDLSVRYRQGAEVMHLSGRGRRDLKRLLNEQAVPAFLRGRWPLLYRDDELLAVANLPGLDGSPNERWRLRWVAPTGDQSLS.

ATP is bound at residue 33–38 (SGGLDS).

This sequence belongs to the tRNA(Ile)-lysidine synthase family.

It is found in the cytoplasm. It carries out the reaction cytidine(34) in tRNA(Ile2) + L-lysine + ATP = lysidine(34) in tRNA(Ile2) + AMP + diphosphate + H(+). Its function is as follows. Ligates lysine onto the cytidine present at position 34 of the AUA codon-specific tRNA(Ile) that contains the anticodon CAU, in an ATP-dependent manner. Cytidine is converted to lysidine, thus changing the amino acid specificity of the tRNA from methionine to isoleucine. This is tRNA(Ile)-lysidine synthase from Pseudomonas syringae pv. tomato (strain ATCC BAA-871 / DC3000).